A 238-amino-acid chain; its full sequence is 1-(5-phosphoribosyl)-5-[(5-phosphoribosylamino)methylideneamino] imidazole-4-carboxamide isomerase (238 aa).

Catalysis depends on Asp8, which acts as the Proton acceptor. Asp129 functions as the Proton donor in the catalytic mechanism.

This sequence belongs to the HisA/HisF family.

Its subcellular location is the cytoplasm. It carries out the reaction 1-(5-phospho-beta-D-ribosyl)-5-[(5-phospho-beta-D-ribosylamino)methylideneamino]imidazole-4-carboxamide = 5-[(5-phospho-1-deoxy-D-ribulos-1-ylimino)methylamino]-1-(5-phospho-beta-D-ribosyl)imidazole-4-carboxamide. The protein operates within amino-acid biosynthesis; L-histidine biosynthesis; L-histidine from 5-phospho-alpha-D-ribose 1-diphosphate: step 4/9. In Anaeromyxobacter dehalogenans (strain 2CP-1 / ATCC BAA-258), this protein is 1-(5-phosphoribosyl)-5-[(5-phosphoribosylamino)methylideneamino] imidazole-4-carboxamide isomerase.